Reading from the N-terminus, the 200-residue chain is Glycerol-3-phosphate acyltransferase (200 aa).

5 consecutive transmembrane segments (helical) span residues 2 to 22 (IHLLLVVAAYLLGSLSFAVIV), 51 to 71 (TAAILTLLGDALKGWVAVVAA), 84 to 104 (IVLLCALAAFIGHLFPVFFGF), 113 to 133 (ALGILVALDPWLGLACLATWV), and 143 to 163 (SLSALVTAVLAPVYAGLLLGW).

The protein belongs to the PlsY family. Probably interacts with PlsX.

It is found in the cell inner membrane. The enzyme catalyses an acyl phosphate + sn-glycerol 3-phosphate = a 1-acyl-sn-glycero-3-phosphate + phosphate. It participates in lipid metabolism; phospholipid metabolism. Catalyzes the transfer of an acyl group from acyl-phosphate (acyl-PO(4)) to glycerol-3-phosphate (G3P) to form lysophosphatidic acid (LPA). This enzyme utilizes acyl-phosphate as fatty acyl donor, but not acyl-CoA or acyl-ACP. The protein is Glycerol-3-phosphate acyltransferase of Thiobacillus denitrificans (strain ATCC 25259 / T1).